The chain runs to 364 residues: Methylthioribose-1-phosphate isomerase (364 aa).

Residues 53 to 55 (RGA), Arg90, and Gln203 contribute to the substrate site. Residue Asp244 is the Proton donor of the active site. Position 254-255 (254-255 (NK)) interacts with substrate.

Belongs to the eIF-2B alpha/beta/delta subunits family. MtnA subfamily.

The catalysed reaction is 5-(methylsulfanyl)-alpha-D-ribose 1-phosphate = 5-(methylsulfanyl)-D-ribulose 1-phosphate. It participates in amino-acid biosynthesis; L-methionine biosynthesis via salvage pathway; L-methionine from S-methyl-5-thio-alpha-D-ribose 1-phosphate: step 1/6. Its function is as follows. Catalyzes the interconversion of methylthioribose-1-phosphate (MTR-1-P) into methylthioribulose-1-phosphate (MTRu-1-P). In Brucella anthropi (strain ATCC 49188 / DSM 6882 / CCUG 24695 / JCM 21032 / LMG 3331 / NBRC 15819 / NCTC 12168 / Alc 37) (Ochrobactrum anthropi), this protein is Methylthioribose-1-phosphate isomerase.